The chain runs to 788 residues: Leucine-rich repeat and fibronectin type-III domain-containing protein 2 (788 aa).

Residues 1–20 (METLLGGLLAFGMAFAVVDA) form the signal peptide. The LRRNT domain occupies 21–52 (CPKYCVCQNLSESLGTLCPSKGLLFVPPDIDR). The Extracellular portion of the chain corresponds to 21-534 (CPKYCVCQNL…MHSQILGGTM (514 aa)). Asn-29 is a glycosylation site (N-linked (GlcNAc...) asparagine). LRR repeat units lie at residues 53–74 (RTVE…DFAN), 77–98 (GLVD…SFLD), 101–122 (SLRS…TLRG), 125–146 (NLQH…AFED), 150–171 (TLED…SVRR), 174–195 (NLHQ…TFAD), and 198–219 (KLAR…PIFA). An LRRCT domain is found at 242–288 (NPLHCNCELLWLRRLERDDDLETCGSPGSLKGRYFWHIREEEFVCEP). Residues 289–375 (PLITQHTHKL…GEATATVEVS (87 aa)) form the Ig-like domain. An intrachain disulfide couples Cys-310 to Cys-359. Asn-332, Asn-341, and Asn-384 each carry an N-linked (GlcNAc...) asparagine glycan. Residues 383–423 (SNSTSRMAPPKSRLSDITGSSKTSRGGGGSGAGEPPKSTPE) are disordered. In terms of domain architecture, Fibronectin type-III spans 422–518 (PERAVLVSDV…GCAQFFTKAD (97 aa)). The chain crosses the membrane as a helical span at residues 535–555 (ILVIGGIIVATLLVFIVILMV). Topologically, residues 556 to 788 (RYKVCNHDTP…SSEWVMESTV (233 aa)) are cytoplasmic. Residues 620–631 (CDSSSSSSLGSG) show a composition bias toward low complexity. Disordered stretches follow at residues 620-655 (CDSS…PSLD) and 668-711 (SQRK…RSLL). Over residues 642–651 (RLPPPAPRPK) the composition is skewed to pro residues. Residues 785–788 (ESTV) carry the PDZ-binding motif.

Belongs to the LRFN family. As to quaternary structure, forms heteromeric complexes with LRFN1, LRFN3, LRFN4 and LRFN5. Can form homomeric complexes, but not across cell junctions. Interacts with DLG4. Directly interacts with DLG1, DLG2 and DLG3. Directly interacts with 2 NMDA receptor subunits GRIN1 and GRIN2A. Post-translationally, glycosylated. As to expression, predominantly expressed in the brain, with a weak, but broad expression in the cerebral cortex and diencephalic nuclei. Strongly expressed in both the pyramidal layer and the dentate gyrus of the hippocampus. Also detected in other parts of the central nervous system, including the olfactory bulb, pons, cerebellum, and medulla oblongata, as well as in the peripheral nervous system, such as the ganglia of cranial nerves and the dorsal root ganglion during gestation.

It is found in the membrane. The protein resides in the synapse. Its subcellular location is the postsynaptic cell membrane. Promotes neurite outgrowth in hippocampal neurons. Enhances the cell surface expression of 2 NMDA receptor subunits GRIN1 and GRIN2A. May play a role in redistributing DLG4 to the cell periphery. The protein is Leucine-rich repeat and fibronectin type-III domain-containing protein 2 (Lrfn2) of Mus musculus (Mouse).